Consider the following 405-residue polypeptide: 3-hydroxy-3-methylglutaryl-coenzyme A reductase (405 aa).

Residues Glu101 and Asp305 each act as charge relay system in the active site. Catalysis depends on His400, which acts as the Proton donor.

It belongs to the HMG-CoA reductase family. In terms of assembly, homodimer.

The protein resides in the cytoplasm. The catalysed reaction is (R)-mevalonate + 2 NADP(+) + CoA = (3S)-3-hydroxy-3-methylglutaryl-CoA + 2 NADPH + 2 H(+). Its pathway is metabolic intermediate biosynthesis; (R)-mevalonate biosynthesis; (R)-mevalonate from acetyl-CoA: step 3/3. With respect to regulation, is competitively inhibited by lovastatin (formerly called mevinolin). Lovastatin also blocks the growth of H.salinarum, and this effect is reversed by addition of mevalonate, indicating the critical role that the mevalonate pathway plays in isoprenoid biosynthesis by these archaea. Its function is as follows. Catalyzes the NADPH-dependent reductive deacylation of (S)-3-hydroxy-3-methylglutaryl-CoA (HMG-CoA) to (R)-mevalonate. Cannot use NADH instead of NADPH. Functions in the mevalonate (MVA) pathway leading to isopentenyl diphosphate (IPP), a key precursor for the biosynthesis of isoprenoid compounds such as archaeal membrane lipids. The chain is 3-hydroxy-3-methylglutaryl-coenzyme A reductase (hmgA) from Halobacterium salinarum (strain ATCC 29341 / DSM 671 / R1).